The following is a 592-amino-acid chain: LIM domain-binding protein 1 (592 aa).

Disordered regions lie at residues 14 to 41 and 305 to 368; these read GHPP…NSQN and PAPE…NPMT. Residues 23 to 41 are compositionally biased toward polar residues; it reads ESSNSHYGMPPSQGTNSQN. Low complexity predominate over residues 322–344; it reads PAANPRGSKKATAAAAAAAAAAT. A compositionally biased stretch (polar residues) spans 352–368; sequence PTASPANNQQFPPNPMT. One can recognise an LIM interaction domain (LID) domain in the interval 378 to 417; it reads DVMVVGEPSMMGSEFGENDERTISRVENSQYDPNAMQMQS. Disordered regions lie at residues 437-458 and 559-592; these read HHPG…MGSQ and GGMQ…MITG. Residues 577–586 show a composition bias toward pro residues; the sequence is GPPPQWPPPN.

This sequence belongs to the LDB family. As to quaternary structure, interacts with blmp-1. As to expression, expressed in all neurons and some other tissues of the adult, including vulval muscle, and, in males, all the neurons of the tail region. Expressed in vulval cells.

Functionally, binds to the LIM domain of LIM domain-containing transcription factors. Required for the blmp-1-mediated transcriptional activation or repression of several hypodermal genes, such as bed-3. Regulates sam-10 nuclear localization in PLM neurons. Has a role in synaptic differentiation of PLM mechanosensory neurons. Involved in gonadogenesis. The chain is LIM domain-binding protein 1 from Caenorhabditis elegans.